We begin with the raw amino-acid sequence, 129 residues long: Small ribosomal subunit protein uS8 (129 aa).

Belongs to the universal ribosomal protein uS8 family. In terms of assembly, part of the 30S ribosomal subunit.

In terms of biological role, one of the primary rRNA binding proteins, it binds directly to 16S rRNA central domain where it helps coordinate assembly of the platform of the 30S subunit. This Thermoplasma volcanium (strain ATCC 51530 / DSM 4299 / JCM 9571 / NBRC 15438 / GSS1) protein is Small ribosomal subunit protein uS8.